A 98-amino-acid chain; its full sequence is NADH-ubiquinone oxidoreductase chain 4L (98 aa).

3 helical membrane-spanning segments follow: residues 1–21, 29–49, and 61–81; these read MTPT…GMLT, SLLC…LIAL, and IILL…LVSI.

The protein belongs to the complex I subunit 4L family. In terms of assembly, core subunit of respiratory chain NADH dehydrogenase (Complex I) which is composed of 45 different subunits.

The protein resides in the mitochondrion inner membrane. It carries out the reaction a ubiquinone + NADH + 5 H(+)(in) = a ubiquinol + NAD(+) + 4 H(+)(out). Functionally, core subunit of the mitochondrial membrane respiratory chain NADH dehydrogenase (Complex I) which catalyzes electron transfer from NADH through the respiratory chain, using ubiquinone as an electron acceptor. Part of the enzyme membrane arm which is embedded in the lipid bilayer and involved in proton translocation. The chain is NADH-ubiquinone oxidoreductase chain 4L (MT-ND4L) from Macaca pagensis (Mentawai macaque).